A 298-amino-acid chain; its full sequence is Small ribosomal subunit protein uS3m (298 aa).

The protein belongs to the universal ribosomal protein uS3 family.

The protein localises to the mitochondrion. The sequence is that of Small ribosomal subunit protein uS3m (RPS3) from Acanthamoeba castellanii (Amoeba).